Consider the following 71-residue polypeptide: MFTLKKSLLLLFFLGTINLSLCEQERDADEEERRDDSEERDIEVEKRFLPLIASVAANLVPKIFCKITKKC.

The first 22 residues, M1 to C22, serve as a signal peptide directing secretion. A propeptide spanning residues E23–E45 is cleaved from the precursor. A disulfide bridge links C65 with C71.

This sequence belongs to the frog skin active peptide (FSAP) family. Brevinin subfamily. In terms of tissue distribution, expressed by the skin glands.

The protein resides in the secreted. In terms of biological role, has antimicrobial activity against Gram-positive bacteria and fungi but has weak or no activity against a range of Gram-negative bacteria except P.faecalis. Active against the Gram-positive bacteria E.faecium 091299 (MIC=37.5 uM), S.aureus ATCC 25923 (MIC=2.4 uM), S.carnosus KHS (MIC=19 uM), B.licheniformis X39 (MIC=2.4 uM) and R.rhodochrous X15 (MIC=1.2 uM) and a lower activity against E.faecalis 981 (MIC=75 uM). Active against the Gram-negative bacterium P.faecalis X29 (MIC=9.5 uM) is virtually inactive against E.coli ATCC 25922 (MIC=150 uM), and inactive against P.aeruginosa and S.typhi. Has antifungal activity against C.albicans ATCC 2002 (MIC=9.5 uM) and is also active against the slime mold 090223 (MIC=1.2 uM). Has low hemolytic activity against human erythrocytes (LC(50)=75 uM). In Odorrana hainanensis (Odor frog), this protein is Brevinin-1V.